Reading from the N-terminus, the 295-residue chain is Pyridoxal 5'-phosphate synthase subunit PdxS (295 aa).

Position 25 (Asp25) interacts with D-ribose 5-phosphate. The active-site Schiff-base intermediate with D-ribose 5-phosphate is Lys82. D-ribose 5-phosphate is bound at residue Gly154. D-glyceraldehyde 3-phosphate is bound at residue Arg166. Residues Gly215 and Gly236–Ser237 contribute to the D-ribose 5-phosphate site.

Belongs to the PdxS/SNZ family. In terms of assembly, in the presence of PdxT, forms a dodecamer of heterodimers.

It carries out the reaction aldehydo-D-ribose 5-phosphate + D-glyceraldehyde 3-phosphate + L-glutamine = pyridoxal 5'-phosphate + L-glutamate + phosphate + 3 H2O + H(+). The protein operates within cofactor biosynthesis; pyridoxal 5'-phosphate biosynthesis. Functionally, catalyzes the formation of pyridoxal 5'-phosphate from ribose 5-phosphate (RBP), glyceraldehyde 3-phosphate (G3P) and ammonia. The ammonia is provided by the PdxT subunit. Can also use ribulose 5-phosphate and dihydroxyacetone phosphate as substrates, resulting from enzyme-catalyzed isomerization of RBP and G3P, respectively. This chain is Pyridoxal 5'-phosphate synthase subunit PdxS, found in Staphylococcus carnosus (strain TM300).